The chain runs to 160 residues: Nucleotide-binding protein VC_1508 (160 aa).

This sequence belongs to the YajQ family.

Nucleotide-binding protein. The protein is Nucleotide-binding protein VC_1508 of Vibrio cholerae serotype O1 (strain ATCC 39315 / El Tor Inaba N16961).